The primary structure comprises 527 residues: Bifunctional purine biosynthesis protein PurH (527 aa).

Residues 1–149 (MASDFLPVRR…KNFARVAVAT (149 aa)) enclose the MGS-like domain.

It belongs to the PurH family.

It carries out the reaction (6R)-10-formyltetrahydrofolate + 5-amino-1-(5-phospho-beta-D-ribosyl)imidazole-4-carboxamide = 5-formamido-1-(5-phospho-D-ribosyl)imidazole-4-carboxamide + (6S)-5,6,7,8-tetrahydrofolate. The enzyme catalyses IMP + H2O = 5-formamido-1-(5-phospho-D-ribosyl)imidazole-4-carboxamide. It functions in the pathway purine metabolism; IMP biosynthesis via de novo pathway; 5-formamido-1-(5-phospho-D-ribosyl)imidazole-4-carboxamide from 5-amino-1-(5-phospho-D-ribosyl)imidazole-4-carboxamide (10-formyl THF route): step 1/1. It participates in purine metabolism; IMP biosynthesis via de novo pathway; IMP from 5-formamido-1-(5-phospho-D-ribosyl)imidazole-4-carboxamide: step 1/1. This Xanthomonas euvesicatoria pv. vesicatoria (strain 85-10) (Xanthomonas campestris pv. vesicatoria) protein is Bifunctional purine biosynthesis protein PurH.